The sequence spans 423 residues: Probable histone-binding protein rbbD (423 aa).

WD repeat units follow at residues 119–159 (NHEG…LEPT), 172–212 (GHKK…KSDS), 222–262 (GHTS…KPIH), 266–306 (AHNS…NRLH), 310–350 (SHTD…EEQN), and 367–407 (GHTS…YNDR).

It belongs to the WD repeat RBAP46/RBAP48/MSI1 family. In terms of assembly, probably binds directly to helix 1 of the histone fold of histone H4, a region that is not accessible when H4 is in chromatin.

The protein localises to the nucleus. In terms of biological role, core histone-binding subunit that may target chromatin assembly factors, chromatin remodeling factors and histone deacetylases to their histone substrates in a manner that is regulated by nucleosomal DNA. Component of several complexes which regulate chromatin metabolism. The sequence is that of Probable histone-binding protein rbbD (rbbD) from Dictyostelium discoideum (Social amoeba).